The following is a 624-amino-acid chain: Alpha-amylase 1 (624 aa).

An N-terminal signal peptide occupies residues Met-1–Arg-28. Residues Glu-40–Ser-133 form the CBM21 domain. Cys-177 and Cys-185 are joined by a disulfide. Trp-230 provides a ligand contact to substrate. Asn-268 contacts Ca(2+). His-269 contacts substrate. Cys-297 and Cys-311 form a disulfide bridge. Asn-304 carries N-linked (GlcNAc...) asparagine glycosylation. Glu-309 and Asp-322 together coordinate Ca(2+). Residue Asn-344 is glycosylated (N-linked (GlcNAc...) asparagine). A substrate-binding site is contributed by Arg-351. Asp-353, His-357, and Glu-377 together coordinate Ca(2+). Catalysis depends on Asp-353, which acts as the Nucleophile. Lys-356 to His-357 serves as a coordination point for substrate. Glu-377 serves as the catalytic Proton donor. Residue Gly-381 participates in substrate binding. Cys-387 and Cys-430 form a disulfide bridge. Positions 444 and 491 each coordinate substrate. A disulfide bond links Cys-587 and Cys-622.

This sequence belongs to the glycosyl hydrolase 13 family. Ca(2+) is required as a cofactor.

It is found in the secreted. It carries out the reaction Endohydrolysis of (1-&gt;4)-alpha-D-glucosidic linkages in polysaccharides containing three or more (1-&gt;4)-alpha-linked D-glucose units.. This is Alpha-amylase 1 (LKA1) from Lipomyces kononenkoae (Yeast).